The following is a 152-amino-acid chain: Catabolic 3-dehydroquinase 1 (152 aa).

Tyrosine 24 functions as the Proton acceptor in the catalytic mechanism. Positions 75, 81, and 88 each coordinate substrate. Residue histidine 101 is the Proton donor of the active site. Substrate contacts are provided by residues 102-103 (VS) and arginine 112.

This sequence belongs to the type-II 3-dehydroquinase family. In terms of assembly, homododecamer. Adopts a ring-like structure, composed of an arrangement of two hexameric rings stacked on top of one another.

The enzyme catalyses 3-dehydroquinate = 3-dehydroshikimate + H2O. The protein operates within aromatic compound metabolism; 3,4-dihydroxybenzoate biosynthesis; 3,4-dihydroxybenzoate from 3-dehydroquinate: step 1/2. Functionally, is involved in the catabolism of quinate. Allows the utilization of quinate as carbon source via the beta-ketoadipate pathway. This Aspergillus terreus (strain NIH 2624 / FGSC A1156) protein is Catabolic 3-dehydroquinase 1.